Here is a 344-residue protein sequence, read N- to C-terminus: Uroporphyrinogen decarboxylase (344 aa).

Substrate-binding positions include 29-33, Asp-79, Tyr-153, Ser-208, and His-324; that span reads RQAGR.

The protein belongs to the uroporphyrinogen decarboxylase family. Homodimer.

The protein localises to the cytoplasm. The enzyme catalyses uroporphyrinogen III + 4 H(+) = coproporphyrinogen III + 4 CO2. It participates in porphyrin-containing compound metabolism; protoporphyrin-IX biosynthesis; coproporphyrinogen-III from 5-aminolevulinate: step 4/4. Catalyzes the decarboxylation of four acetate groups of uroporphyrinogen-III to yield coproporphyrinogen-III. The sequence is that of Uroporphyrinogen decarboxylase from Rhizorhabdus wittichii (strain DSM 6014 / CCUG 31198 / JCM 15750 / NBRC 105917 / EY 4224 / RW1) (Sphingomonas wittichii).